Reading from the N-terminus, the 293-residue chain is Ribosomal protein L11 methyltransferase (293 aa).

S-adenosyl-L-methionine-binding residues include T145, G166, D188, and N229.

The protein belongs to the methyltransferase superfamily. PrmA family.

Its subcellular location is the cytoplasm. It catalyses the reaction L-lysyl-[protein] + 3 S-adenosyl-L-methionine = N(6),N(6),N(6)-trimethyl-L-lysyl-[protein] + 3 S-adenosyl-L-homocysteine + 3 H(+). Methylates ribosomal protein L11. In Halorhodospira halophila (strain DSM 244 / SL1) (Ectothiorhodospira halophila (strain DSM 244 / SL1)), this protein is Ribosomal protein L11 methyltransferase.